The primary structure comprises 952 residues: 2-oxoglutarate dehydrogenase E1 component (952 aa).

The protein belongs to the alpha-ketoglutarate dehydrogenase family. In terms of assembly, homodimer. Part of the 2-oxoglutarate dehydrogenase (OGDH) complex composed of E1 (2-oxoglutarate dehydrogenase), E2 (dihydrolipoamide succinyltransferase) and E3 (dihydrolipoamide dehydrogenase); the complex contains multiple copies of the three enzymatic components (E1, E2 and E3). Thiamine diphosphate serves as cofactor.

The enzyme catalyses N(6)-[(R)-lipoyl]-L-lysyl-[protein] + 2-oxoglutarate + H(+) = N(6)-[(R)-S(8)-succinyldihydrolipoyl]-L-lysyl-[protein] + CO2. Its function is as follows. E1 component of the 2-oxoglutarate dehydrogenase (OGDH) complex which catalyzes the decarboxylation of 2-oxoglutarate, the first step in the conversion of 2-oxoglutarate to succinyl-CoA and CO(2). The chain is 2-oxoglutarate dehydrogenase E1 component from Geobacillus sp. (strain WCH70).